The primary structure comprises 84 residues: Beta-cardiotoxin CTX23 (84 aa).

The first 21 residues, 1–21, serve as a signal peptide directing secretion; sequence MKTLLLTLVVVTIVCLDLGYT. 4 disulfides stabilise this stretch: Cys24/Cys43, Cys36/Cys61, Cys65/Cys76, and Cys77/Cys82.

This sequence belongs to the three-finger toxin family. Short-chain subfamily. Aminergic toxin sub-subfamily. Expressed by the venom gland.

It is found in the secreted. In terms of biological role, acts as a beta-blocker by binding to beta-1 and beta-2 adrenergic receptors (ADRB1 and ADRB2). It dose-dependently decreases the heart rate (bradycardia), whereas conventional cardiotoxins increases it. At 100 mg/kg, intraperitoneal injection into mice provokes labored breathing, impaired locomotion, lack of response to external stimuli, and death (after 30 minutes). The protein is Beta-cardiotoxin CTX23 of Ophiophagus hannah (King cobra).